A 304-amino-acid chain; its full sequence is MSVAPIDFQQVEKRYDDKLVVDGLSFHVQPGECFGLLGPNGAGKTTTLKMLLGITHPDAGSISLCGEPVPSRARHARQRVGVVPQFDNLDPDFTVRENLLVFARYFGLTAHAARALVPPLLEFAKLESKADAKVGELSGGMKRRLTLARALVNDPDVLVLDEPTTGLDPQARHLMWERLRSLLARGKTILLTTHFMEEAERLCHRLCVIEEGRKIAEGAPRMLIEAEIGCDVIEIYGPDPVQLRDELAPFAERTEISGETLFCYVDNPEPIHARLKGRTGLRYLHRPANLEDVFLRLTGREMLD.

Positions 6-236 (IDFQQVEKRY…EIGCDVIEIY (231 aa)) constitute an ABC transporter domain. Residue 38-45 (GPNGAGKT) participates in ATP binding.

This sequence belongs to the ABC transporter superfamily. Lipooligosaccharide exporter (TC 3.A.1.102) family. In terms of assembly, the complex is composed of two ATP-binding proteins (NodI) and two transmembrane proteins (NodJ).

It is found in the cell inner membrane. Part of the ABC transporter complex NodIJ involved in the export of the nodulation factors (Nod factors), the bacterial signal molecules that induce symbiosis and subsequent nodulation induction. Nod factors are LCO (lipo-chitin oligosaccharide), a modified beta-1,4-linked N-acetylglucosamine oligosaccharide. This subunit is responsible for energy coupling to the transport system. The polypeptide is Nod factor export ATP-binding protein I (Burkholderia pseudomallei (strain K96243)).